A 186-amino-acid polypeptide reads, in one-letter code: Probable GTP-binding protein EngB (186 aa).

The 169-residue stretch at 18–186 (DKVEICFIGR…LKKLLASEFK (169 aa)) folds into the EngB-type G domain. Residues 26–33 (GRSNVGKS), 52–56 (GRTQL), 70–73 (DLPG), 137–140 (TKID), and 166–168 (VSS) each bind GTP. Ser-33 and Thr-54 together coordinate Mg(2+).

The protein belongs to the TRAFAC class TrmE-Era-EngA-EngB-Septin-like GTPase superfamily. EngB GTPase family. The cofactor is Mg(2+).

Necessary for normal cell division and for the maintenance of normal septation. This chain is Probable GTP-binding protein EngB, found in Mycoplasmopsis pulmonis (strain UAB CTIP) (Mycoplasma pulmonis).